Consider the following 332-residue polypeptide: DNA-directed RNA polymerase subunit alpha (332 aa).

Residues 1–230 (MKKITTSAYM…KQMSIFNNVL (230 aa)) are alpha N-terminal domain (alpha-NTD). An alpha C-terminal domain (alpha-CTD) region spans residues 246–332 (EHSKLLESVE…LRKKISELKS (87 aa)).

It belongs to the RNA polymerase alpha chain family. Homodimer. The RNAP catalytic core consists of 2 alpha, 1 beta, 1 beta' and 1 omega subunit. When a sigma factor is associated with the core the holoenzyme is formed, which can initiate transcription.

The catalysed reaction is RNA(n) + a ribonucleoside 5'-triphosphate = RNA(n+1) + diphosphate. Its function is as follows. DNA-dependent RNA polymerase catalyzes the transcription of DNA into RNA using the four ribonucleoside triphosphates as substrates. The protein is DNA-directed RNA polymerase subunit alpha of Campylobacter fetus subsp. fetus (strain 82-40).